Reading from the N-terminus, the 196-residue chain is Small ribosomal subunit protein uS4c (196 aa).

The tract at residues 15 to 43 is disordered; sequence LGALPGLTRKTPKSGSNQKKKFHSGKKEQ. Residues 89–150 enclose the S4 RNA-binding domain; that stretch reads MRLDNILFRL…NQRSKRLVQN (62 aa).

The protein belongs to the universal ribosomal protein uS4 family. Part of the 30S ribosomal subunit. Contacts protein S5. The interaction surface between S4 and S5 is involved in control of translational fidelity.

It is found in the plastid. Its subcellular location is the chloroplast. One of the primary rRNA binding proteins, it binds directly to 16S rRNA where it nucleates assembly of the body of the 30S subunit. Its function is as follows. With S5 and S12 plays an important role in translational accuracy. In Melinis repens (Red Natal grass), this protein is Small ribosomal subunit protein uS4c (rps4).